The following is a 99-amino-acid chain: Acylphosphatase (99 aa).

Residues 5–97 form the Acylphosphatase-like domain; that stretch reads VRQVTVQGRV…RPGERFSTLP (93 aa). Residues Arg20 and Asn38 contribute to the active site.

This sequence belongs to the acylphosphatase family.

It carries out the reaction an acyl phosphate + H2O = a carboxylate + phosphate + H(+). In Rhodopseudomonas palustris (strain BisB18), this protein is Acylphosphatase (acyP).